Reading from the N-terminus, the 65-residue chain is uncharacterized protein (65 aa).

This is an uncharacterized protein from Thermoproteus tenax (TTV1).